The chain runs to 124 residues: Fluoride-specific ion channel FluC (124 aa).

The next 4 membrane-spanning stretches (helical) occupy residues 4–24 (VLFV…ISLL), 35–55 (FGTL…FALG), 62–82 (PEIK…FSTF), and 95–115 (LVKA…VVYL). Residues Gly-74 and Thr-77 each contribute to the Na(+) site.

This sequence belongs to the fluoride channel Fluc/FEX (TC 1.A.43) family.

The protein resides in the cell inner membrane. The enzyme catalyses fluoride(in) = fluoride(out). Its activity is regulated as follows. Na(+) is not transported, but it plays an essential structural role and its presence is essential for fluoride channel function. In terms of biological role, fluoride-specific ion channel. Important for reducing fluoride concentration in the cell, thus reducing its toxicity. The protein is Fluoride-specific ion channel FluC of Shewanella halifaxensis (strain HAW-EB4).